The chain runs to 85 residues: U5-theraphotoxin-Hhn1a (85 aa).

The first 21 residues, Met1–Ala21, serve as a signal peptide directing secretion. Residues Ser22–Arg49 constitute a propeptide that is removed on maturation. 3 cysteine pairs are disulfide-bonded: Cys51/Cys65, Cys58/Cys70, and Cys64/Cys77.

The protein belongs to the neurotoxin 10 (Hwtx-1) family. 18 (Hntx-VII) subfamily. Expressed by the venom gland.

Its subcellular location is the secreted. In terms of biological role, ion channel impairing toxin that inhibits voltage-gated sodium channels. The recombinantly expressed toxin shows a weak activity against Nav1.7/SCN9A, and shifts the voltage dependence of channel activation to more depolarized potentials. In Cyriopagopus hainanus (Chinese bird spider), this protein is U5-theraphotoxin-Hhn1a.